The sequence spans 102 residues: MAKQKVRIRLKAYDHKILDQSARQIVEAAERTGALVAGPVPLPTKIERYSVIRSGFIDKDSQEQFEIRTHKRLIDVLDPSQQTINALMKLNLPAGVDIEIKL.

The protein belongs to the universal ribosomal protein uS10 family. In terms of assembly, part of the 30S ribosomal subunit.

In terms of biological role, involved in the binding of tRNA to the ribosomes. This chain is Small ribosomal subunit protein uS10, found in Chloroflexus aurantiacus (strain ATCC 29366 / DSM 635 / J-10-fl).